The sequence spans 101 residues: MTSTTPEIEALAADIGEQIAIDVAKWNLFLAEAHLHIPLAERVYPLLEKDELGRAGVEAALKDLSVAIGGGKVNISLLDALSSTMVNRLLTLLEEYQSKNF.

The protein localises to the cellular thylakoid membrane. The protein is Thylakoid-associated protein slr0729 of Synechocystis sp. (strain ATCC 27184 / PCC 6803 / Kazusa).